A 340-amino-acid polypeptide reads, in one-letter code: Extracellular matrix protein-binding protein emp (340 aa).

A signal peptide spans 1–26 (MKKKLLVLTMSTLFATQIMNSNHAKA).

The protein localises to the cell surface. Its function is as follows. Adhesin that binds to the host cell extracellular matrix proteins fibronectin, fibrinogen, collagen, and vitronectin. This is Extracellular matrix protein-binding protein emp (emp) from Staphylococcus aureus (strain USA300).